A 356-amino-acid chain; its full sequence is Glycerol-1-phosphate dehydrogenase [NAD(P)+] (356 aa).

Residues 103–107 (GRSID) and 125–128 (TAAS) contribute to the NAD(+) site. Asp-130 is a binding site for substrate. Ser-134 is a binding site for NAD(+). Asp-177 contributes to the substrate binding site. Zn(2+)-binding residues include Asp-177 and His-257. His-261 lines the substrate pocket. Residue His-273 coordinates Zn(2+).

This sequence belongs to the glycerol-1-phosphate dehydrogenase family. Zn(2+) serves as cofactor.

The protein localises to the cytoplasm. The enzyme catalyses sn-glycerol 1-phosphate + NAD(+) = dihydroxyacetone phosphate + NADH + H(+). It carries out the reaction sn-glycerol 1-phosphate + NADP(+) = dihydroxyacetone phosphate + NADPH + H(+). It participates in membrane lipid metabolism; glycerophospholipid metabolism. In terms of biological role, catalyzes the NAD(P)H-dependent reduction of dihydroxyacetonephosphate (DHAP or glycerone phosphate) to glycerol 1-phosphate (G1P). The G1P thus generated is used as the glycerophosphate backbone of phospholipids in the cellular membranes of Archaea. This Methanosarcina acetivorans (strain ATCC 35395 / DSM 2834 / JCM 12185 / C2A) protein is Glycerol-1-phosphate dehydrogenase [NAD(P)+].